Reading from the N-terminus, the 224-residue chain is N-terminal Xaa-Pro-Lys N-methyltransferase 1-A (224 aa).

Residues Gly70, Arg75, 92–94 (DVT), 120–121 (LQ), and Gln136 contribute to the S-adenosyl-L-methionine site.

This sequence belongs to the methyltransferase superfamily. NTM1 family.

Its subcellular location is the nucleus. It carries out the reaction N-terminal L-alanyl-L-prolyl-L-lysyl-[protein] + 3 S-adenosyl-L-methionine = N-terminal N,N,N-trimethyl-L-alanyl-L-prolyl-L-lysyl-[protein] + 3 S-adenosyl-L-homocysteine + 3 H(+). The catalysed reaction is N-terminal L-seryl-L-prolyl-L-lysyl-[protein] + 3 S-adenosyl-L-methionine = N-terminal N,N,N-trimethyl-L-seryl-L-prolyl-L-lysyl-[protein] + 3 S-adenosyl-L-homocysteine + 3 H(+). The enzyme catalyses N-terminal L-prolyl-L-prolyl-L-lysyl-[protein] + 2 S-adenosyl-L-methionine = N-terminal N,N-dimethyl-L-prolyl-L-prolyl-L-lysyl-[protein] + 2 S-adenosyl-L-homocysteine + 2 H(+). In terms of biological role, distributive alpha-N-methyltransferase that methylates the N-terminus of target proteins containing the N-terminal motif [Ala/Gly/Pro/Ser]-Pro-Lys when the initiator Met is cleaved. Specifically catalyzes mono-, di- or tri-methylation of the exposed alpha-amino group of the Ala, Gly or Ser residue in the [Ala/Gly/Ser]-Pro-Lys motif and mono- or di-methylation of Pro in the Pro-Pro-Lys motif. Required during mitosis for normal bipolar spindle formation and chromosome segregation via its action on target proteins. In Xenopus laevis (African clawed frog), this protein is N-terminal Xaa-Pro-Lys N-methyltransferase 1-A (ntmt1-a).